A 396-amino-acid chain; its full sequence is Probable sugar efflux transporter (396 aa).

12 helical membrane passes run 15–35 (VVTL…PVGL), 50–70 (VGIM…PFML), 81–101 (LICL…SWSF), 103–123 (VLVI…SITA), 136–156 (AQAL…GLPL), 170–190 (FFAI…LLPL), 209–229 (PALM…YTAY), 246–266 (FATA…VIFG), 275–295 (ALVS…LPAA), 299–319 (IHLG…GLGM), 333–353 (VAMA…ALVG), and 364–384 (MIGY…IIIF).

Belongs to the major facilitator superfamily. SotB (TC 2.A.1.2) family.

It localises to the cell inner membrane. Its function is as follows. Involved in the efflux of sugars. The physiological role may be the reduction of the intracellular concentration of toxic sugars or sugar metabolites. The protein is Probable sugar efflux transporter of Escherichia coli O157:H7 (strain EC4115 / EHEC).